The following is a 470-amino-acid chain: Argininosuccinate lyase (470 aa).

The protein belongs to the lyase 1 family. Argininosuccinate lyase subfamily.

It localises to the cytoplasm. It catalyses the reaction 2-(N(omega)-L-arginino)succinate = fumarate + L-arginine. Its pathway is amino-acid biosynthesis; L-arginine biosynthesis; L-arginine from L-ornithine and carbamoyl phosphate: step 3/3. This is Argininosuccinate lyase from Prochlorococcus marinus (strain MIT 9303).